The following is a 272-amino-acid chain: Cytochrome c oxidase subunit 3 (272 aa).

The next 7 helical transmembrane spans lie at 20 to 40 (PWPL…VLFM), 45 to 65 (GGGE…FTWW), 89 to 109 (GMIL…WAFF), 128 to 148 (VVAI…LSSG), 166 to 186 (AMQG…MQGF), 204 to 224 (FYMA…FLFI), and 248 to 268 (YWHF…WWGF).

It belongs to the cytochrome c oxidase subunit 3 family. In terms of assembly, component of the cytochrome c oxidase (complex IV, CIV), a multisubunit enzyme composed of a catalytic core of 3 subunits and several supernumerary subunits. The complex exists as a monomer or a dimer and forms supercomplexes (SCs) in the inner mitochondrial membrane with ubiquinol-cytochrome c oxidoreductase (cytochrome b-c1 complex, complex III, CIII).

Its subcellular location is the mitochondrion inner membrane. The catalysed reaction is 4 Fe(II)-[cytochrome c] + O2 + 8 H(+)(in) = 4 Fe(III)-[cytochrome c] + 2 H2O + 4 H(+)(out). Its function is as follows. Component of the cytochrome c oxidase, the last enzyme in the mitochondrial electron transport chain which drives oxidative phosphorylation. The respiratory chain contains 3 multisubunit complexes succinate dehydrogenase (complex II, CII), ubiquinol-cytochrome c oxidoreductase (cytochrome b-c1 complex, complex III, CIII) and cytochrome c oxidase (complex IV, CIV), that cooperate to transfer electrons derived from NADH and succinate to molecular oxygen, creating an electrochemical gradient over the inner membrane that drives transmembrane transport and the ATP synthase. Cytochrome c oxidase is the component of the respiratory chain that catalyzes the reduction of oxygen to water. Electrons originating from reduced cytochrome c in the intermembrane space (IMS) are transferred via the dinuclear copper A center (CU(A)) of subunit 2 and heme A of subunit 1 to the active site in subunit 1, a binuclear center (BNC) formed by heme A3 and copper B (CU(B)). The BNC reduces molecular oxygen to 2 water molecules using 4 electrons from cytochrome c in the IMS and 4 protons from the mitochondrial matrix. The protein is Cytochrome c oxidase subunit 3 (COX3) of Pylaiella littoralis (Seaweed).